We begin with the raw amino-acid sequence, 202 residues long: Solute carrier family 66 member 3 (202 aa).

Residues 1–19 (MEAGLLWFCNWSTLGVCAA) form the signal peptide. The next 4 helical transmembrane spans lie at 33 to 53 (SARG…LVFL), 64 to 84 (LTYL…LFVF), 94 to 114 (LPYM…KWII), and 171 to 191 (LTIL…TATV).

The protein localises to the membrane. The polypeptide is Solute carrier family 66 member 3 (Slc66a3) (Mus musculus (Mouse)).